The following is a 316-amino-acid chain: Protoheme IX farnesyltransferase (316 aa).

The next 9 membrane-spanning stretches (helical) occupy residues Ile-29–Val-49, Leu-54–Ile-74, Leu-102–Val-122, Leu-123–Leu-143, Ile-151–Gly-171, Val-179–Ile-199, Ile-224–Pro-241, Leu-245–Leu-267, and Phe-283–Thr-303.

It belongs to the UbiA prenyltransferase family. Protoheme IX farnesyltransferase subfamily.

The protein resides in the cell inner membrane. The enzyme catalyses heme b + (2E,6E)-farnesyl diphosphate + H2O = Fe(II)-heme o + diphosphate. The protein operates within porphyrin-containing compound metabolism; heme O biosynthesis; heme O from protoheme: step 1/1. Its function is as follows. Converts heme B (protoheme IX) to heme O by substitution of the vinyl group on carbon 2 of heme B porphyrin ring with a hydroxyethyl farnesyl side group. The sequence is that of Protoheme IX farnesyltransferase from Synechocystis sp. (strain ATCC 27184 / PCC 6803 / Kazusa).